We begin with the raw amino-acid sequence, 284 residues long: RNase adapter protein RapZ (284 aa).

8–15 (GRSGSGKS) is an ATP binding site. 56 to 59 (DVRN) serves as a coordination point for GTP. The tract at residues 266–284 (RSRGKNVQSRHRTLEKRKP) is RNA-binding.

This sequence belongs to the RapZ-like family. RapZ subfamily. As to quaternary structure, homotrimer.

Its function is as follows. Modulates the synthesis of GlmS, by affecting the processing and stability of the regulatory small RNA GlmZ. When glucosamine-6-phosphate (GlcN6P) concentrations are high in the cell, RapZ binds GlmZ and targets it to cleavage by RNase E. Consequently, GlmZ is inactivated and unable to activate GlmS synthesis. Under low GlcN6P concentrations, RapZ is sequestered and inactivated by an other regulatory small RNA, GlmY, preventing GlmZ degradation and leading to synthesis of GlmS. The chain is RNase adapter protein RapZ from Shigella boydii serotype 18 (strain CDC 3083-94 / BS512).